The primary structure comprises 61 residues: Large ribosomal subunit protein eL20 (61 aa).

It belongs to the eukaryotic ribosomal protein eL20 family. In terms of assembly, part of the 50S ribosomal subunit. Binds 23S rRNA.

The polypeptide is Large ribosomal subunit protein eL20 (Methanosarcina mazei (strain ATCC BAA-159 / DSM 3647 / Goe1 / Go1 / JCM 11833 / OCM 88) (Methanosarcina frisia)).